The following is a 376-amino-acid chain: Peroxisomal targeting signal 2 receptor (376 aa).

WD repeat units lie at residues 58 to 98 (DTQD…YPVM), 102 to 142 (EHQR…NTSL), 182 to 222 (DNND…PLFM), 226 to 267 (AHNG…PNVH), 279 to 319 (GHEF…TSRV), and 339 to 376 (AHTE…QRLQ).

The protein belongs to the WD repeat peroxin-7 family. As to quaternary structure, interacts with PEX20. In terms of processing, polyubiquitinated, leading to its degradation by the proteasome. Ubiquitination is dependent of PEX5 and PEX20 and takes place following recycling into the cytosol.

It is found in the cytoplasm. The protein localises to the cytosol. The protein resides in the peroxisome matrix. Its function is as follows. Receptor required for the peroxisomal import of proteins containing a C-terminal PTS2-type peroxisomal targeting signal, such as 3-oxoacyl-CoA thiolase. Specifically binds to cargo proteins containing a PTS2 peroxisomal targeting signal in the cytosol. Cargo protein-binding triggers interaction with PEX20 and formation of a ternary complex composed of PEX20 and PEX7 along with PTS2-containing cargo proteins, which is tranlocated into peroxisomes by passing through the peroxisomal docking complex. PEX7 receptor is then retrotranslocated into the cytosol, where it is ubiquitinated and degraded. The sequence is that of Peroxisomal targeting signal 2 receptor from Komagataella phaffii (strain GS115 / ATCC 20864) (Yeast).